Consider the following 438-residue polypeptide: Probable tRNA pseudouridine synthase D (438 aa).

The active-site Nucleophile is D86. Residues 165–390 (GVPNFFGIQR…SKGTRRELLL (226 aa)) enclose the TRUD domain.

This sequence belongs to the pseudouridine synthase TruD family.

It carries out the reaction uridine(13) in tRNA = pseudouridine(13) in tRNA. In terms of biological role, could be responsible for synthesis of pseudouridine from uracil-13 in transfer RNAs. The sequence is that of Probable tRNA pseudouridine synthase D from Methanosarcina barkeri (strain Fusaro / DSM 804).